The primary structure comprises 243 residues: Adenosylcobinamide-GDP ribazoletransferase (243 aa).

A run of 7 helical transmembrane segments spans residues 8–28, 36–56, 58–78, 107–127, 131–151, 187–207, and 222–242; these read WLGA…PIQL, PWVG…LDFL, VPSP…TGGL, AGAF…TSLS, KGSV…WAIA, FLLP…LLIP, and YGAV…VGSA.

The protein belongs to the CobS family. Mg(2+) is required as a cofactor.

The protein localises to the cell inner membrane. The enzyme catalyses alpha-ribazole + adenosylcob(III)inamide-GDP = adenosylcob(III)alamin + GMP + H(+). The catalysed reaction is alpha-ribazole 5'-phosphate + adenosylcob(III)inamide-GDP = adenosylcob(III)alamin 5'-phosphate + GMP + H(+). The protein operates within cofactor biosynthesis; adenosylcobalamin biosynthesis; adenosylcobalamin from cob(II)yrinate a,c-diamide: step 7/7. In terms of biological role, joins adenosylcobinamide-GDP and alpha-ribazole to generate adenosylcobalamin (Ado-cobalamin). Also synthesizes adenosylcobalamin 5'-phosphate from adenosylcobinamide-GDP and alpha-ribazole 5'-phosphate. The sequence is that of Adenosylcobinamide-GDP ribazoletransferase from Thermosynechococcus vestitus (strain NIES-2133 / IAM M-273 / BP-1).